A 578-amino-acid polypeptide reads, in one-letter code: Penicillin-binding protein activator LpoA (578 aa).

Positions 1–30 (MPTILVQSYGFRQKMKTIFIPTALALLLAA) are cleaved as a signal peptide. A lipid anchor (N-palmitoyl cysteine) is attached at cysteine 31. Cysteine 31 carries S-diacylglycerol cysteine lipidation.

Belongs to the LpoA family. Interacts with PBP1a.

It localises to the cell outer membrane. Its function is as follows. Regulator of peptidoglycan synthesis that is essential for the function of penicillin-binding protein 1A (PBP1a). This is Penicillin-binding protein activator LpoA from Glaesserella parasuis serovar 5 (strain SH0165) (Haemophilus parasuis).